Reading from the N-terminus, the 246-residue chain is Biosynthetic peptidoglycan transglycosylase (246 aa).

Residues 27–47 (VVFCFFFAVFALLLIFRFVPI) form a helical membrane-spanning segment.

Belongs to the glycosyltransferase 51 family.

The protein localises to the cell inner membrane. The enzyme catalyses [GlcNAc-(1-&gt;4)-Mur2Ac(oyl-L-Ala-gamma-D-Glu-L-Lys-D-Ala-D-Ala)](n)-di-trans,octa-cis-undecaprenyl diphosphate + beta-D-GlcNAc-(1-&gt;4)-Mur2Ac(oyl-L-Ala-gamma-D-Glu-L-Lys-D-Ala-D-Ala)-di-trans,octa-cis-undecaprenyl diphosphate = [GlcNAc-(1-&gt;4)-Mur2Ac(oyl-L-Ala-gamma-D-Glu-L-Lys-D-Ala-D-Ala)](n+1)-di-trans,octa-cis-undecaprenyl diphosphate + di-trans,octa-cis-undecaprenyl diphosphate + H(+). It participates in cell wall biogenesis; peptidoglycan biosynthesis. In terms of biological role, peptidoglycan polymerase that catalyzes glycan chain elongation from lipid-linked precursors. This Haemophilus influenzae (strain ATCC 51907 / DSM 11121 / KW20 / Rd) protein is Biosynthetic peptidoglycan transglycosylase.